The sequence spans 721 residues: Polyribonucleotide nucleotidyltransferase (721 aa).

Mg(2+)-binding residues include Asp495 and Asp501. Residues 562–621 (PRLLSFRIDPELIGTVIGPGGRTIKGITERTNTKIDIEDSGIVTIASHDGAAADEAQKII) enclose the KH domain. Positions 631 to 699 (GEVFSGAITR…NRGRINLTLR (69 aa)) constitute an S1 motif domain. The tract at residues 700–721 (GVPQNGEEAEPAPAPTPVAPLN) is disordered. Over residues 711–721 (APAPTPVAPLN) the composition is skewed to pro residues.

It belongs to the polyribonucleotide nucleotidyltransferase family. The cofactor is Mg(2+).

The protein localises to the cytoplasm. It catalyses the reaction RNA(n+1) + phosphate = RNA(n) + a ribonucleoside 5'-diphosphate. Involved in mRNA degradation. Catalyzes the phosphorolysis of single-stranded polyribonucleotides processively in the 3'- to 5'-direction. In Synechococcus sp. (strain WH7803), this protein is Polyribonucleotide nucleotidyltransferase.